A 456-amino-acid chain; its full sequence is Bifunctional protein GlmU (456 aa).

The interval 1-230 (MDKRFAVILA…FQETLGVNDR (230 aa)) is pyrophosphorylase. UDP-N-acetyl-alpha-D-glucosamine contacts are provided by residues 9–12 (LAAG), Lys-23, Gln-73, and 78–79 (GT). Mg(2+) is bound at residue Asp-103. 4 residues coordinate UDP-N-acetyl-alpha-D-glucosamine: Gly-140, Glu-155, Asn-170, and Asn-228. Asn-228 is a Mg(2+) binding site. Residues 231-251 (VALSQAEMYMKERINKRHMQN) are linker. Residues 252–456 (GVTLIDPMNT…EDYVKNIHKK (205 aa)) are N-acetyltransferase. 2 residues coordinate UDP-N-acetyl-alpha-D-glucosamine: Arg-333 and Lys-351. His-363 acts as the Proton acceptor in catalysis. UDP-N-acetyl-alpha-D-glucosamine contacts are provided by Tyr-366 and Asn-377. Residues 386-387 (NY), Ala-423, and Arg-440 contribute to the acetyl-CoA site.

In the N-terminal section; belongs to the N-acetylglucosamine-1-phosphate uridyltransferase family. It in the C-terminal section; belongs to the transferase hexapeptide repeat family. As to quaternary structure, homotrimer. The cofactor is Mg(2+).

It localises to the cytoplasm. The catalysed reaction is alpha-D-glucosamine 1-phosphate + acetyl-CoA = N-acetyl-alpha-D-glucosamine 1-phosphate + CoA + H(+). The enzyme catalyses N-acetyl-alpha-D-glucosamine 1-phosphate + UTP + H(+) = UDP-N-acetyl-alpha-D-glucosamine + diphosphate. It participates in nucleotide-sugar biosynthesis; UDP-N-acetyl-alpha-D-glucosamine biosynthesis; N-acetyl-alpha-D-glucosamine 1-phosphate from alpha-D-glucosamine 6-phosphate (route II): step 2/2. Its pathway is nucleotide-sugar biosynthesis; UDP-N-acetyl-alpha-D-glucosamine biosynthesis; UDP-N-acetyl-alpha-D-glucosamine from N-acetyl-alpha-D-glucosamine 1-phosphate: step 1/1. The protein operates within bacterial outer membrane biogenesis; LPS lipid A biosynthesis. In terms of biological role, catalyzes the last two sequential reactions in the de novo biosynthetic pathway for UDP-N-acetylglucosamine (UDP-GlcNAc). The C-terminal domain catalyzes the transfer of acetyl group from acetyl coenzyme A to glucosamine-1-phosphate (GlcN-1-P) to produce N-acetylglucosamine-1-phosphate (GlcNAc-1-P), which is converted into UDP-GlcNAc by the transfer of uridine 5-monophosphate (from uridine 5-triphosphate), a reaction catalyzed by the N-terminal domain. This Bacillus velezensis (strain DSM 23117 / BGSC 10A6 / LMG 26770 / FZB42) (Bacillus amyloliquefaciens subsp. plantarum) protein is Bifunctional protein GlmU.